A 590-amino-acid chain; its full sequence is MVNSNEEDERRILDVEESLLTQEEVNNHLTGLSSTAEDGSIDIYGNPPSKKKTGNWKACPFILGNECCERLAYYGIAKNLITYYTSELHESNVSAASDVMIWQGTCYITPLIGAVIADSYWGRYWTIASFSAIYFIGMALLTLSASLPVLKPAACAGVAAALCSPATTVQYAVFFTGLYLIALGTGGIKPCVSSFGADQFDDTDPRERVRKASFFNWFYFSINIGSFISSTLLVWVQENVGWGLGFLIPTVFMGVSIASFFIGTPLYRFQKPGGSPITRVCQVLVAAYRKLKLNLPEDISFLYETREKNSMIAGSRKIQHTDGYKFLDKAAVISEYESKSGAFSNPWKLCTVTQVEEVKTLIRMFPIWASGIVYSVLYSQISTLFVQQGRSMNRIIRSFEIPPASFGVFDTLIVLISIPIYDRFLVPFVRRFTGIPKGLTDLQRMGIGLFLSVLSIAAAAIVETVRLQLAQDFVAMSIFWQIPQYILMGIAEVFFFIGRVEFFYDESPDAMRSVCSALALLNTAVGSYLSSLILTLVAYFTALGGKDGWVPDDLNKGHLDYFFWLLVSLGLVNIPVYALICVKHTKKKAL.

The helical transmembrane segment at 96–116 threads the bilayer; that stretch reads ASDVMIWQGTCYITPLIGAVI. Position 126 is a phosphothreonine (T126). The next 10 helical transmembrane spans lie at 130-150, 168-188, 214-234, 242-262, 365-385, 401-421, 445-465, 478-498, 524-544, and 562-582; these read FSAI…LPVL, TVQY…TGGI, FFNW…TLLV, WGLG…SFFI, FPIW…STLF, IPPA…IPIY, MGIG…VETV, IFWQ…FFIG, AVGS…TALG, and FFWL…LICV.

Belongs to the major facilitator superfamily. Proton-dependent oligopeptide transporter (POT/PTR) (TC 2.A.17) family. In terms of tissue distribution, expressed in shoots, roots, stems, leaves, flowers and siliques.

The protein resides in the membrane. This is Protein NRT1/ PTR FAMILY 8.5 (NPF8.5) from Arabidopsis thaliana (Mouse-ear cress).